Here is a 295-residue protein sequence, read N- to C-terminus: Nucleotide-binding protein BLi03725/BL03417 (295 aa).

16 to 23 (GMSGAGKT) lines the ATP pocket. 67 to 70 (DLRG) contacts GTP.

It belongs to the RapZ-like family.

In terms of biological role, displays ATPase and GTPase activities. The chain is Nucleotide-binding protein BLi03725/BL03417 from Bacillus licheniformis (strain ATCC 14580 / DSM 13 / JCM 2505 / CCUG 7422 / NBRC 12200 / NCIMB 9375 / NCTC 10341 / NRRL NRS-1264 / Gibson 46).